The chain runs to 155 residues: Photosystem I reaction center subunit XI (155 aa).

The next 2 helical transmembrane spans lie at leucine 80–phenylalanine 102 and glycine 117–leucine 139.

It belongs to the PsaL family.

Its subcellular location is the cellular thylakoid membrane. In Thermosynechococcus vestitus (strain NIES-2133 / IAM M-273 / BP-1), this protein is Photosystem I reaction center subunit XI.